Reading from the N-terminus, the 397-residue chain is Succinate--CoA ligase [ADP-forming] subunit beta (397 aa).

In terms of domain architecture, ATP-grasp spans 9–254 (KALLKGYGAP…ETEEDAKEIE (246 aa)). Residues Lys46, 53–55 (GRG), Glu109, Ala112, and Glu117 contribute to the ATP site. Mg(2+) is bound by residues Asn209 and Asp223. Substrate contacts are provided by residues Asn274 and 331–333 (GIM).

This sequence belongs to the succinate/malate CoA ligase beta subunit family. As to quaternary structure, heterotetramer of two alpha and two beta subunits. Requires Mg(2+) as cofactor.

It catalyses the reaction succinate + ATP + CoA = succinyl-CoA + ADP + phosphate. The enzyme catalyses GTP + succinate + CoA = succinyl-CoA + GDP + phosphate. It participates in carbohydrate metabolism; tricarboxylic acid cycle; succinate from succinyl-CoA (ligase route): step 1/1. In terms of biological role, succinyl-CoA synthetase functions in the citric acid cycle (TCA), coupling the hydrolysis of succinyl-CoA to the synthesis of either ATP or GTP and thus represents the only step of substrate-level phosphorylation in the TCA. The beta subunit provides nucleotide specificity of the enzyme and binds the substrate succinate, while the binding sites for coenzyme A and phosphate are found in the alpha subunit. The polypeptide is Succinate--CoA ligase [ADP-forming] subunit beta (Rhizobium leguminosarum bv. trifolii (strain WSM2304)).